The chain runs to 102 residues: MDINIIEDKNNALLNRHEVKFDATFKGSTPSRLDVRGKLAAMLNVPLELVILQKFENTYGMSAANGYAKIYEDAARMKVVEKEYVLKRNELPEAEVVEEAGE.

This sequence belongs to the eukaryotic ribosomal protein eS24 family.

This chain is Small ribosomal subunit protein eS24, found in Methanococcoides burtonii (strain DSM 6242 / NBRC 107633 / OCM 468 / ACE-M).